The sequence spans 1777 residues: Non-reducing polyketide synthase nscA (1777 aa).

Residues 27 to 261 (DLFRRLDQHS…PLPVYDGLCH (235 aa)) are N-terminal acylcarrier protein transacylase domain (SAT). The Ketosynthase family 3 (KS3) domain maps to 396-829 (SSKLAIVGMA…GGNTTLLLED (434 aa)). Active-site for beta-ketoacyl synthase activity residues include Cys569, His704, and His747. The malonyl-CoA:ACP transacylase (MAT) domain stretch occupies residues 934-1212 (AFTGQGAYYH…SAIPSCRRNE (279 aa)). Positions 1297–1616 (TSLVHQITAE…RLLMDRFFSP (320 aa)) are product template (PT) domain. Positions 1301 to 1437 (HQITAETVEA…ATIRFEDPEA (137 aa)) are N-terminal hotdog fold. A PKS/mFAS DH domain is found at 1301–1611 (HQITAETVEA…FRRVPRLLMD (311 aa)). The Proton acceptor; for dehydratase activity role is filled by His1333. The segment at 1465–1611 (ASRLSKPLAY…FRRVPRLLMD (147 aa)) is C-terminal hotdog fold. The active-site Proton donor; for dehydratase activity is the Asp1522. The interval 1674-1704 (LLATSSKSSTPKESPIVTPAESERAEPVDNS) is disordered. Residues 1677–1688 (TSSKSSTPKESP) show a composition bias toward low complexity. A Carrier domain is found at 1700-1777 (PVDNSMTSQC…EMTAWIEEYC (78 aa)). The residue at position 1737 (Ser1737) is an O-(pantetheine 4'-phosphoryl)serine.

Pantetheine 4'-phosphate is required as a cofactor.

Its pathway is secondary metabolite biosynthesis. In terms of biological role, non-reducing polyketide synthase; part of the gene cluster that mediates the biosynthesis of neosartoricin B, a prenylated anthracenone that probably exhibits T-cell antiproliferative activity, suggestive of a physiological role as an immunosuppressive agent. The non-reducing polyketide synthase nscA probably synthesizes and cyclizes the decaketide backbone. The hydrolase nscB then mediates the product release through hydrolysis followed by spontaneous decarboxylation. The prenyltransferase nscD catalyzes the addition of the dimethylallyl group to the aromatic C5. The FAD-dependent monooxygenase nscC is then responsible for the stereospecific hydroxylation at C2. Neosartoricin B can be converted into two additional compounds neosartoricins C and D. Neosartoricin C is a spirocyclic compound that is cyclized through the attack of C3 hydroxyl on C14, followed by dehydration. On the other hand, neosartoricin D is a further cyclized compound in which attack of C2 on C14 in neosartoricin C results in the formation of the acetal-containing dioxabicyclo-octanone ring. Both of these compounds are novel and possibly represent related metabolites of the gene cluster. The sequence is that of Non-reducing polyketide synthase nscA from Trichophyton equinum (strain ATCC MYA-4606 / CBS 127.97) (Horse ringworm fungus).